Here is a 299-residue protein sequence, read N- to C-terminus: ATP phosphoribosyltransferase (299 aa).

Belongs to the ATP phosphoribosyltransferase family. Long subfamily. In terms of assembly, equilibrium between an active dimeric form, an inactive hexameric form and higher aggregates. Interconversion between the various forms is largely reversible and is influenced by the natural substrates and inhibitors of the enzyme. Mg(2+) serves as cofactor.

It is found in the cytoplasm. It catalyses the reaction 1-(5-phospho-beta-D-ribosyl)-ATP + diphosphate = 5-phospho-alpha-D-ribose 1-diphosphate + ATP. It participates in amino-acid biosynthesis; L-histidine biosynthesis; L-histidine from 5-phospho-alpha-D-ribose 1-diphosphate: step 1/9. Its activity is regulated as follows. Feedback inhibited by histidine. Its function is as follows. Catalyzes the condensation of ATP and 5-phosphoribose 1-diphosphate to form N'-(5'-phosphoribosyl)-ATP (PR-ATP). Has a crucial role in the pathway because the rate of histidine biosynthesis seems to be controlled primarily by regulation of HisG enzymatic activity. This Erwinia tasmaniensis (strain DSM 17950 / CFBP 7177 / CIP 109463 / NCPPB 4357 / Et1/99) protein is ATP phosphoribosyltransferase.